Reading from the N-terminus, the 3680-residue chain is MLWWEEVEDCYEREDVQKKTFTKWVNAQFSKFGKQHIENLFSDLQDGRRLLDLLEGLTGQKLPKEKGSTRVHALNNVNKALRVLQKNNVDLVNIGSTDIVDGNHKLTLGLIWNIILHWQVKNVMKNIMAGLQQTNSEKILLSWVRQSTRNYPQVNVINFTTSWSDGLALNALIHSHRPDLFDWNSVVCQQSATQRLEHAFNIAKYQLGIEKLLDPEDVATTYPDKKSILMYITSLFQVLPQQVSIEAIQEVEMLPRPSQVTREEHFQIHHQMHYSQQITVSLAQGYERAPSFPKPRFKSYAYTQAAYVTTSDPTRSPLPSQHLETPEDKSFGRSLTETEANLDSYQTALEEVLSWLLSAEDALQAQGEISNDVEEVKEQFHTHEGYMMDLTSHQGRVGNVLQLGSQLIGTGKLSEDEETEVQEQMNLLNSRWECLRVASMEKQSNLHKVLMDLQNQQLKELNDWLTKTEERTRKMEKEPLGPDIEDLKRQVQQHKVLQEDLEQEQVRVNSLTHMVVVVDESSGDHATAALEEQLKVLGDRWANICRWTEDRWVLLQDILLKWQRFTEEQCLFSAWLSEKEDAVNKIHTTGFKDQSEVLSNLQKLAVLKTDLEKKKQTMDKLCSLNQDLLSALKNTVVAHKMEAWLDNFAQRWDNLVQKLEKSSAQISQAVTTTQPSLTQTTVMETVTMVTTREHILVKHAQEELPPPPPQKKRQIIVDSEIRKRLDVDITELHSWITRSEAVLQSPEFAIYRKEGNFSDLKEKVNAIEREKAEKFRKLQDASRSAQALVEQMVNEGVNADSIKQASEQLNSRWIEFCQLLSERLNWLEYQNNIITFYNQLQQLEQMTTTAENWLKTQPTTTSEPTAIKSQLKICKDEINRLSALQPQIERLKIQSIALKEKGQGPMFLDADFVAFTNHFNQVFADVQAREKELQTIFDSLPPMRYQETMSTILTWIQQSETKLSIPQVTVTEYDIMEQRLGELQALQSSLQEQQNGLNYLSTTVKEMSKKAPLSDISRKYQSEFEEIEGRWKKLSSQLVEHCQKLEEQMAKLRKIQNHIKTLKKWITEVDVFLKEEWPALGDSEILKRQLKQCRLLVNDIQTIQPSLNSVNEGAQKMKNEAEPEFAGRLETELRELNTQWDYMCRQVYARKEALKGGLDKTVSLQKDLSEMHEWMTQAEEEYLERDFEYKTPDELQTAVEEMKRAKEEAQQKEAKVKLLTESVNSVIAQAPPAAQEALKKELDTLTTNYQWLCTRLNGKCKTLEEVWACWHELLSYLEKANKWLSEVEVKLKTTENISGGAEEIAEVLDSLENLMQHSEDNPNQIRILAQTLTDGGVMDELINEELETFNSRWRELHEEAVRRQKLLEQSIQSAQEIEKSLHLIQESLSSIDKQLAAYIADKVDAAQMPQEAQKIQSDLTSHEISLEEMKKHNQGKETAQRVLSQIDVAQKKLQDVSMKFRLFQKPANFEQRLQESKMILDEVKMHLPALETKSVEQEVVQSQLNHCVNLYKSLSEVKSEVEMVIKTGRQIVQKKQTENPKELDERVTALKLHYNELGAKVTERKQQLEKCLKLSRKMRKEMNALTEWLAATDMELTKRSAVEGMPSNLDSEVAWGKATQKEIEKQKVHLKSVTEVGEALKTVLGKKEMLVEDKLSLLNSNWIAVTSRAEEWLNLLLEYQKHMETFDQNVDYITNWIIQADALLDESEKKKPQQKEDILKRLKAEMNDIRPKVDSTRDQAANLMANRGDHCRKVVEPKISELNHRFAAISHRIKTGKASIPLKELEQFNSDIQKLLEPLEAEIQQGVNLKEEDFNKDMSEDNEGTVKELLQRGDNLQQRITDERKREEIKIKQQLLQTKHNALKDLRSQRRKKALEISHQWYQYKRQADDLLKCLDDIEKKLASLPEPRDERKIKEIDRELQKKKEELNAVRRQAEGLSEDGAAMAVEPTQIQLSKRWREIESKFAQFRRLNFAQIHTVHEESVVAMTEDMPLEISYVPSTYLTEITHVSQALSEVEELLNAPDLCAQDFEDLFKQEESLKNIKDSLQQISGRIDIIHNKKTAALHSATPAERAKLQEALSRLDFQWERVNNMYKDRQGRFDRSVEKWRRFHYDMKILNQWLTEAEQFLKKTQIPENWEHAKYKWYLKELQDGIGQRQSVVRVLNATGEEIIQQSSKTDASILQEKLGSLNLRWQEVCKQLAERKKRLEEQKNILSEFQRDVNEFVLWLEEADNVANIPLEPGNEQQLKEKLEQVKLLAEELPLRQGILKQLNETGGTVLVSAPLSPEEQDKLENKLKQTNLQWIKVSRNLPEKQEEIEAHVKDLGQLEEQLNHLLLWLSPIRNQLEIYNQPNQTGPFDIKEIEVAVQAKQPDVEGILSKGQHLYKEKPATQPAKRKLEDLSSDWKVVTQLLQELRAKQPGPAPGLTTVRAPPSQTVTLVTQPAVTKETAISKLEMPSSLLLEVPALADFNRAWTELTDWLSLLDRVIKSQRVMVGDLEDINEMIIKQKATLQDLEQRRPQLEELITAAQNLKNKTSNQEARTIITDRIERIQSQWDEVQEHLQNRRLQLTEMLKDSTQWLEAKEEAEQVLGQARAKLESWKEAPYTVDAIQKKITETKQLAKDLRQWQINVDVANDLALKLLRDYSADDTRKVHMITENINASWASIHKRLSEREAALEETHRLLQQFPLDLEKFLAWLTEAETTANVLQDATHKERLLEDSKGVRELMKQWQDLQGEIEAHTDIYHNLDENGQKVLRSLEGSDDAALLQRRLDNMNFKWSELRKKSLNIRSHLEASSDQWKRLHLSLQELLVWLQLKDDELSRQAPIGGDFPAVQKQNDVHRAFKRELKTKEPVIMSTLETVRIFLTEQPLEGLEKLYQEPRELPPEERAQNVTRLLRKQAEEVNTQWEKLNVHSADWQRKIDEALERLQELQEATDELDLKLRQAEVIKGSWQPVGDLLIDSLQDHLEKVKALRGEITPLKENVSYVNDLARQLTTLGIQLSPYNLNTLEDLNTRWKLLQVAIEDRIRQLHEAHRDFGPASQHFLSTSVQGPWERAISPNKVPYYINHETQTTCWDHPKMTELYQSLADLNNVRFSAYRTAMKLRRLQKALCLDLLSLSAACDALDQHNLKQNDQPMDILQVINCLTTIYDRLEQEHNNLVNVPLCVDMCLNWLLNVYDTGRTGRIRVLSFKTGIISLCKAHLEDKYRYLFKQVASSTGFCDQRRLGLLLHDSIQIPRQLGEVASFGGSNIEPSVRSCFQFANNKPEIEAALFLDWMRLEPQSMVWLPVLHRVAAAETAKHQAKCNICKECPIIGFRYRSLKHFNYDICQSCFFSGRVAKGHKMHYPMVEYCTPTTSGEDVRDFAKVLKNKFRTKRYFAKHPRMGYLPVQTVLEGDNMETPVTLINFWPVDSAPASSPQLSHDDTHSRIEHYASRLKKMENSNGSYLNDSISPNESIDDEHLLIQHYWRSLNQESPLSQPRSPAQILISLESEERGELERILADLEGRNRNLQAEYDRLKQQHEHKGLSPLPSPPEMMPTSPQSPRDAELIAEAKLLRQHKGRLEARMQILEDHNKQLESQLHRLRQLLEQPQAEAKVNGTTVSSPSTSLQRSDSSQPMLLRVVGSQTSESMGEEDLLSPPQDTSTGLEEVMEQLNHSFPSSRGRNTPGKPMREDTM.

The segment at 1–237 is actin-binding; sequence MLWWEEVEDC…ILMYITSLFQ (237 aa). Calponin-homology (CH) domains lie at 15–119 and 134–240; these read DVQK…LHWQ and TNSE…QVLP. Residues 63 to 72 form an ANK2- and ANK-3 binding region; the sequence is PKEKGSTRVH. Polar residues predominate over residues 310 to 323; that stretch reads TSDPTRSPLPSQHL. Residues 310–332 are disordered; that stretch reads TSDPTRSPLPSQHLETPEDKSFG. 24 Spectrin repeats span residues 340–448, 449–557, 560–668, 720–829, 831–935, 944–1047, 1050–1156, 1159–1265, 1268–1369, 1370–1465, 1470–1570, 1573–1678, 1681–1780, 1781–1876, 1879–1981, 1994–2103, 2106–2210, 2213–2320, 2321–2418, 2470–2572, 2575–2681, 2684–2797, 2803–2925, and 2930–3035; these read ANLD…NLHK, VLMD…LLQD, LKWQ…QISQ, EIRK…WLEY, NNII…ELQT, RYQE…KLEE, AKLR…ALKG, DKTV…TLEE, ACWH…LLEQ, SIQS…LFQK, EQRL…QLEK, KLSR…LLLE, KHME…KASI, PLKE…KALE, HQWY…TVHE, EISY…RFDR, EKWR…RLEE, NILS…EIEA, HVKD…LRAK, FNRA…QLTE, KDST…ALEE, RLLQ…HLEA, KRLH…RKID, and RLQE…QLHE. The interval 1418 to 1915 is interaction with SYNM; the sequence is DLTSHEISLE…PEPRDERKIK (498 aa). Residues 3050–3083 form the WW domain; the sequence is TSVQGPWERAISPNKVPYYINHETQTTCWDHPKM. Residues 3053-3403 form an interaction with SYNM region; that stretch reads QGPWERAISP…TVLEGDNMET (351 aa). The segment at 3303-3359 adopts a ZZ-type; degenerate zinc-finger fold; it reads KHQAKCNICKECPIIGFRYRSLKHFNYDICQSCFFSGRVAKGHKMHYPMVEYCTPTT. Residues C3308, C3311, C3332, and C3335 each contribute to the Zn(2+) site. Residues 3461 to 3513 form a binds to SNTB1 region; the sequence is DDEHLLIQHYWRSLNQESPLSQPRSPAQILISLESEERGELERILADLEGRNR. 3 positions are modified to phosphoserine: S3478, S3485, and S3495. Disordered regions lie at residues 3524 to 3549 and 3595 to 3680; these read QQHE…QSPR and PQAE…EDTM. Polar residues-rich tracts occupy residues 3602 to 3621 and 3658 to 3668; these read NGTT…SSQP and LNHSFPSSRGR. S3607, S3608, S3612, S3618, S3619, and S3661 each carry phosphoserine.

As to quaternary structure, interacts with SYNM. Interacts with the syntrophins SNTG1 and SNTG2. Interacts with KRT19. Component of the dystrophin-associated glycoprotein complex which is composed of three subcomplexes: a cytoplasmic complex comprised of DMD (or UTRN), DTNA and a number of syntrophins, such as SNTB1, SNTB2, SNTG1 and SNTG2, the transmembrane dystroglycan complex, and the sarcoglycan-sarcospan complex. Interacts with DAG1 (betaDAG1) with DMD; the interaction is inhibited by phosphorylation on the PPXY motif of DAG1. Interacts with SYNM; SNTA1 and SNTB1. Interacts with CMYA5. Directly interacts with ANK2 and ANK3; these interactions do not interfere with betaDAG1-binding and are necessary for proper localization in muscle cells. Identified in a dystroglycan complex that contains at least PRX, DRP2, UTRN, DMD and DAG1. Interacts with DTNB. Interacts with PGM5; the interaction is direct. Interacts with NOS1; localizes NOS1 to sarcolemma in muscle cells.

It is found in the cell membrane. It localises to the sarcolemma. Its subcellular location is the cytoplasm. The protein localises to the cytoskeleton. The protein resides in the postsynaptic cell membrane. Functionally, anchors the extracellular matrix to the cytoskeleton via F-actin. Ligand for dystroglycan. Component of the dystrophin-associated glycoprotein complex which accumulates at the neuromuscular junction (NMJ) and at a variety of synapses in the peripheral and central nervous systems and has a structural function in stabilizing the sarcolemma. Also implicated in signaling events and synaptic transmission. This chain is Dystrophin (DMD), found in Canis lupus familiaris (Dog).